A 149-amino-acid polypeptide reads, in one-letter code: Large ribosomal subunit protein uL15A (149 aa).

Residues arginine 21 to histidine 40 are disordered.

It belongs to the universal ribosomal protein uL15 family. In terms of assembly, component of the large ribosomal subunit.

Its subcellular location is the cytoplasm. The protein resides in the cytosol. The protein localises to the endoplasmic reticulum. Functionally, component of the large ribosomal subunit. The ribosome is a large ribonucleoprotein complex responsible for the synthesis of proteins in the cell. The sequence is that of Large ribosomal subunit protein uL15A (rpl27a-1) from Entamoeba histolytica (strain ATCC 30459 / HM-1:IMSS / ABRM).